Consider the following 270-residue polypeptide: Small ribosomal subunit protein eS1 (270 aa).

2 disordered regions span residues methionine 1–lysine 20 and glycine 238–valine 270.

Belongs to the eukaryotic ribosomal protein eS1 family. In terms of assembly, component of the small ribosomal subunit. Mature ribosomes consist of a small (40S) and a large (60S) subunit. The 40S subunit contains about 33 different proteins and 1 molecule of RNA (18S). The 60S subunit contains about 49 different proteins and 3 molecules of RNA (28S, 5.8S and 5S).

Its subcellular location is the cytoplasm. The sequence is that of Small ribosomal subunit protein eS1 from Culex quinquefasciatus (Southern house mosquito).